The following is a 211-amino-acid chain: Thiamine-phosphate synthase (211 aa).

4-amino-2-methyl-5-(diphosphooxymethyl)pyrimidine-binding positions include Gln-35 to Lys-39 and Asn-67. Positions 68 and 87 each coordinate Mg(2+). Ser-106 is a 4-amino-2-methyl-5-(diphosphooxymethyl)pyrimidine binding site. Position 132-134 (Thr-132–Ser-134) interacts with 2-[(2R,5Z)-2-carboxy-4-methylthiazol-5(2H)-ylidene]ethyl phosphate. Residue Lys-135 coordinates 4-amino-2-methyl-5-(diphosphooxymethyl)pyrimidine. 2-[(2R,5Z)-2-carboxy-4-methylthiazol-5(2H)-ylidene]ethyl phosphate contacts are provided by residues Gly-163 and Ile-183–Ser-184.

The protein belongs to the thiamine-phosphate synthase family. Requires Mg(2+) as cofactor.

The catalysed reaction is 2-[(2R,5Z)-2-carboxy-4-methylthiazol-5(2H)-ylidene]ethyl phosphate + 4-amino-2-methyl-5-(diphosphooxymethyl)pyrimidine + 2 H(+) = thiamine phosphate + CO2 + diphosphate. It catalyses the reaction 2-(2-carboxy-4-methylthiazol-5-yl)ethyl phosphate + 4-amino-2-methyl-5-(diphosphooxymethyl)pyrimidine + 2 H(+) = thiamine phosphate + CO2 + diphosphate. The enzyme catalyses 4-methyl-5-(2-phosphooxyethyl)-thiazole + 4-amino-2-methyl-5-(diphosphooxymethyl)pyrimidine + H(+) = thiamine phosphate + diphosphate. It participates in cofactor biosynthesis; thiamine diphosphate biosynthesis; thiamine phosphate from 4-amino-2-methyl-5-diphosphomethylpyrimidine and 4-methyl-5-(2-phosphoethyl)-thiazole: step 1/1. In terms of biological role, condenses 4-methyl-5-(beta-hydroxyethyl)thiazole monophosphate (THZ-P) and 2-methyl-4-amino-5-hydroxymethyl pyrimidine pyrophosphate (HMP-PP) to form thiamine monophosphate (TMP). This is Thiamine-phosphate synthase from Methanoculleus marisnigri (strain ATCC 35101 / DSM 1498 / JR1).